Consider the following 506-residue polypeptide: Cytochrome P450 monooxygenase BOA3 (506 aa).

A helical transmembrane segment spans residues 15–35 (IYLWIGFVLVVLLAYPTYFAI). Cys451 is a heme binding site.

The protein belongs to the cytochrome P450 family. The cofactor is heme.

The protein localises to the membrane. It participates in polyketide biosynthesis. In terms of biological role, cytochrome P450 monooxygenase; part of the gene cluster A that mediates the biosynthesis of botcinic acid and its botcinin derivatives, acetate-derived polyketides that contribute to virulence when combined with the sesquiterpene botrydial. Botcinic acid and its derivatives have been shown to induce chlorosis and necrosis during host plant infection, but also have antifungal activities. Two polyketide synthases, BOA6 and BOA9, are involved in the biosynthesis of botcinins. BOA6 mediates the formation of the per-methylated tetraketide core by condensation of four units of malonyl-CoA with one unit of acetyl-CoA, which would be methylated in activated methylene groups to yield a bicyclic acid intermediate that could then either be converted to botrylactone derivatives or lose the starter acetate unit through a retro-Claisen type C-C bond cleavage to yield botcinin derivatives. The second polyketide synthase, BOA9, is probably required for the biosynthesis of the tetraketide side chain of botcinins. The methyltransferase (MT) domain within BOA6 is probably responsible for the incorporation of four methyl groups. The trans-enoyl reductase BOA5 might take over the enoyl reductase function of BOA6 that misses an ER domain. The monooxygenases BOA2, BOA3 and BOA4 might be involved in further hydroxylations at C4, C5 and C8, whereas BOA7, close to BOA9, could potentially be involved in the hydroxylation at C4 in the side chain of botcinins. This chain is Cytochrome P450 monooxygenase BOA3, found in Botryotinia fuckeliana (strain B05.10) (Noble rot fungus).